Consider the following 417-residue polypeptide: UDP-N-acetylglucosamine 1-carboxyvinyltransferase (417 aa).

22–23 contacts phosphoenolpyruvate; the sequence is KN. Arg91 is a UDP-N-acetyl-alpha-D-glucosamine binding site. Residue Cys115 is the Proton donor of the active site. At Cys115 the chain carries 2-(S-cysteinyl)pyruvic acid O-phosphothioketal. UDP-N-acetyl-alpha-D-glucosamine is bound by residues 120–124, Asp304, and Ile326; that span reads RPVDL.

The protein belongs to the EPSP synthase family. MurA subfamily.

It localises to the cytoplasm. The enzyme catalyses phosphoenolpyruvate + UDP-N-acetyl-alpha-D-glucosamine = UDP-N-acetyl-3-O-(1-carboxyvinyl)-alpha-D-glucosamine + phosphate. It participates in cell wall biogenesis; peptidoglycan biosynthesis. Cell wall formation. Adds enolpyruvyl to UDP-N-acetylglucosamine. The protein is UDP-N-acetylglucosamine 1-carboxyvinyltransferase of Nitratidesulfovibrio vulgaris (strain DP4) (Desulfovibrio vulgaris).